Here is a 479-residue protein sequence, read N- to C-terminus: Phosphoglycerate kinase, glycosomal (479 aa).

Valine 23, aspartate 24, phenylalanine 25, asparagine 26, arginine 39, serine 61, histidine 62, glycine 64, arginine 65, arginine 132, histidine 168, and arginine 169 together coordinate (2R)-3-phosphoglycerate. ADP-binding residues include glycine 214 and alanine 215. Glycine 214 contributes to the CDP binding site. Positions 215 and 216 each coordinate AMP. Alanine 215 contributes to the ATP binding site. Position 215 (alanine 215) interacts with Mg(2+). Residue lysine 216 participates in (2R)-3-phosphoglycerate binding. Residue aspartate 219 coordinates CDP. Aspartate 219 is a Mg(2+) binding site. ADP-binding residues include lysine 220 and glycine 238. Lysine 220 serves as a coordination point for AMP. Lysine 220 contacts ATP. A CDP-binding site is contributed by glycine 238. 2 residues coordinate AMP: alanine 239 and alanine 311. Residues alanine 239 and alanine 311 each contribute to the ATP site. Residues alanine 311 and asparagine 335 each coordinate ADP. Residues glycine 336 and phenylalanine 341 each contribute to the CDP site. ADP is bound by residues phenylalanine 341, glutamate 342, aspartate 374, and serine 375. Glutamate 342 is a binding site for AMP. ATP-binding residues include glutamate 342, aspartate 374, and serine 375. A Mg(2+)-binding site is contributed by aspartate 374.

This sequence belongs to the phosphoglycerate kinase family. As to quaternary structure, monomer. Mg(2+) serves as cofactor.

The protein resides in the glycosome. The enzyme catalyses (2R)-3-phosphoglycerate + ATP = (2R)-3-phospho-glyceroyl phosphate + ADP. It functions in the pathway carbohydrate degradation; glycolysis; pyruvate from D-glyceraldehyde 3-phosphate: step 2/5. The sequence is that of Phosphoglycerate kinase, glycosomal (PGKC) from Leishmania major.